A 379-amino-acid polypeptide reads, in one-letter code: Protein RecA (379 aa).

Residues 1–24 (MSVDVKSAQSSKSDSLQAEPRPGE) form a disordered region. Residues 7-16 (SAQSSKSDSL) show a composition bias toward polar residues. 84 to 91 (GPESSGKT) contacts ATP.

Belongs to the RecA family.

It localises to the cytoplasm. In terms of biological role, can catalyze the hydrolysis of ATP in the presence of single-stranded DNA, the ATP-dependent uptake of single-stranded DNA by duplex DNA, and the ATP-dependent hybridization of homologous single-stranded DNAs. It interacts with LexA causing its activation and leading to its autocatalytic cleavage. The protein is Protein RecA of Prochlorococcus marinus (strain MIT 9303).